The primary structure comprises 258 residues: Alpha-fibrinogenase-like (258 aa).

The N-terminal stretch at 1-18 (MVLIRVLANLLVLQLSYA) is a signal peptide. A propeptide spanning residues 19 to 24 (QKSSEL) is cleaved from the precursor. The 225-residue stretch at 25-249 (VVGGHPCNIY…YTDWIHSIIA (225 aa)) folds into the Peptidase S1 domain. Disulfide bonds link C31–C163, C50–C66, C98–C256, C142–C210, C174–C189, and C200–C225. N-linked (GlcNAc...) asparagine glycosylation is present at N44. Active-site charge relay system residues include H65 and D110. The active-site Charge relay system is the S204.

It belongs to the peptidase S1 family. Snake venom subfamily. In terms of assembly, monomer. In terms of tissue distribution, expressed by the venom gland.

The protein localises to the secreted. Its function is as follows. Degrades alpha chain of fibrinogen (FGA), and has strong caseinolytic activity. Cleaves oxidized insulin B-chain at '40-Tyr-|-Leu-41', '48-Phe-|-Phe-49' and '49-Phe-|-Tyr-50', and glucagon at the bonds '62-Tyr-|-Ser-63', 66-Leu-|-Asp-67' and '78-Leu-|-Met-79' bonds. This is Alpha-fibrinogenase-like from Daboia siamensis (Eastern Russel's viper).